Here is a 291-residue protein sequence, read N- to C-terminus: ATP synthase gamma chain (291 aa).

The protein belongs to the ATPase gamma chain family. In terms of assembly, F-type ATPases have 2 components, CF(1) - the catalytic core - and CF(0) - the membrane proton channel. CF(1) has five subunits: alpha(3), beta(3), gamma(1), delta(1), epsilon(1). CF(0) has three main subunits: a, b and c.

The protein resides in the cell inner membrane. Its function is as follows. Produces ATP from ADP in the presence of a proton gradient across the membrane. The gamma chain is believed to be important in regulating ATPase activity and the flow of protons through the CF(0) complex. In Burkholderia mallei (strain NCTC 10247), this protein is ATP synthase gamma chain.